We begin with the raw amino-acid sequence, 1361 residues long: MWGGGKMAVVSLSPHTAKMRKLFGQASTTMAYDGLKREAERRTRSDHNITMVAKDDELYLYHLTLKKQTNFVHSCIGHFVDLEAGSKREQSQLCVATETHLELYDTADGELKLIAKFQNLFATITSMKSLDLPHSGSRAKASNWPTFLALTSDSGNLSIVQIIMHAGALRLKTLVNQPLTRTTLRRVSPISYMEIDPNGRCIILSSVEQNKLCFLVDYAQKLRISSPLEIIRPHMVTLDMAVVDVNFNNPCFVTLEIDNAATQLSVHLIFYVLELGLNHIVKKADYLVNPSANFVLSLPDLSRYNITTSLSDNNYDADYDTLFNPFVVIGFENHILVKDMNGFFSLKVEIPKRSITNSRHKNVTIISGIVQKLKNDFFVLLQSNHGDLFKLTVSPDTNDRNRPLVQLSYFDTIQNSHQLHIFKNGYLFALSEMNNNFLFQFEKLGVEKNDFSNVLTSKDPNKSLVFEPSIKLQNLSILSQQLNLNPSIKSQIVSDSPLSIATKHFTNNKIITLTNAVNYSNLISTSLPPNATKLWLIPDPATTGDNNTLLFITFPKKTMILQIDNESMEELTPDEATRSAFKLSQDTTIHTCLMGSHSIIQVCTAELRHIVPTGKSRYSNKLTWVPPAGIRIVCATSSKTQLIISLSNYELVYFKIDVSSDSLIELTTHPELDTMPSKVAIVQDTQHADLLAIADNEGMIKIMSLKDQKEDFLTVISLQLVSEKISDMIMVRDSSIGQLNLHVGLENGVYMKFHIGDVDGSFTDIKRRFLGLKPVSLSYLREISVSLNNEEEEEEEEDDDDEKEEEEINSSGAKWMSCVVCHSSSTWVSYTWKNVWTIRQLKDQNMLSCSKFVNADVAINGVCSISSSGRLNIGRVSNFPTLDNWFHVHESSVNKQENGGGDESNEEEEDEMEEEMEMLQISTFRPRTILSFPNNPKSILFIDNHSGKKQCRISLQIDGECLKFGSSDHLYKILDDIDCVSAAIIDFTRQADHLIICAGDKRLLTYKILVNKDKLSFDIELLHQTEIISPIHAMLKFKNFLLTAMGSTIVLYGLGKKQLLRRSVTQTPVSITKIVSMHQWNYERLAVGDIHESVTLFIWDPAGNVFIPYVDDSVKRHVTVLKFLDEATVIGADRYGNAWTLRSPPECEKIMSNHDPSELSNGAIKYPLDVITLQQKLPNTYDCKFKFQLLNHFFVNDIITDFHILDSLSNSDRPGCIYMGLQGTVGCFIPLLSKGNVFMMGNIENIMAEADDTFYLDYESRKKNNNMRKEDDEEESGSVVLQGRHGIEDEIICEGSCSILGRDHQEYRSYYAPVRKVIDGDLCENFLRLSLNEQEFLAKNLKSVQVEDIIQTINEVRTNYM.

Disordered stretches follow at residues Asn788–Ser811 and Val893–Met912. 2 stretches are compositionally biased toward acidic residues: residues Asn789 to Ile808 and Glu903 to Met912.

The protein belongs to the RSE1 family. In terms of assembly, belongs to the SF3B complex, a U2 associated sub-complex of the spliceosome. The SF3B complex is composed of at least CUS1, HSH49, HSH155, RDS3 and RSE1. Also belongs to the CWC complex (or CEF1-associated complex), a spliceosome sub-complex reminiscent of a late-stage spliceosome composed of the U2, U5 and U6 snRNAs and at least BUD13, BUD31, BRR2, CDC40, CEF1, CLF1, CUS1, CWC2, CWC15, CWC21, CWC22, CWC23, CWC24, CWC25, CWC27, ECM2, HSH155, IST3, ISY1, LEA1, MSL1, NTC20, PRP8, PRP9, PRP11, PRP19, PRP21, PRP22, PRP45, PRP46, SLU7, SMB1, SMD1, SMD2, SMD3, SMX2, SMX3, SNT309, SNU114, SPP2, SYF1, SYF2, RSE1 and YJU2. Interacts with RDS3.

The protein localises to the nucleus. Its function is as follows. Involved in G2/M transition. Required for pre-mRNA splicing and endoplasmic reticulum (ER) to Golgi secretion pathway. U2 snRNPs associated protein required for the pre-spliceosome assembly. The involvement in ER to Golgi secretion is probably indirect and due to the splicing of the pre-mRNA coding for SAR1, a small GTP-binding protein required for COPII vesicle formation from the ER. In Saccharomyces cerevisiae (strain ATCC 204508 / S288c) (Baker's yeast), this protein is Pre-mRNA-splicing factor RSE1 (RSE1).